Consider the following 485-residue polypeptide: Glutamyl-tRNA(Gln) amidotransferase subunit A (485 aa).

Residues lysine 80 and serine 155 each act as charge relay system in the active site. Serine 179 acts as the Acyl-ester intermediate in catalysis.

This sequence belongs to the amidase family. GatA subfamily. Heterotrimer of A, B and C subunits.

It carries out the reaction L-glutamyl-tRNA(Gln) + L-glutamine + ATP + H2O = L-glutaminyl-tRNA(Gln) + L-glutamate + ADP + phosphate + H(+). Functionally, allows the formation of correctly charged Gln-tRNA(Gln) through the transamidation of misacylated Glu-tRNA(Gln) in organisms which lack glutaminyl-tRNA synthetase. The reaction takes place in the presence of glutamine and ATP through an activated gamma-phospho-Glu-tRNA(Gln). This is Glutamyl-tRNA(Gln) amidotransferase subunit A from Leptospira borgpetersenii serovar Hardjo-bovis (strain L550).